A 257-amino-acid chain; its full sequence is Low affinity immunoglobulin gamma Fc region receptor III-A (257 aa).

Residues 1–19 (MWQLLSPTALLLLVSVPGT) form the signal peptide. The Extracellular segment spans residues 20–209 (HAEDPPKSVV…ILSFFLPWHQ (190 aa)). 2 consecutive Ig-like C2-type domains span residues 25-104 (PKSV…LRLE) and 108-190 (GWLL…VKVT). Disulfide bonds link Cys-48-Cys-90 and Cys-129-Cys-173. Residues Asn-64, Asn-134, and Asn-162 are each glycosylated (N-linked (GlcNAc...) asparagine). Residue Asp-181 is glycosylated (N-linked (GlcNAc...) asparagine; in variant N-181). The chain crosses the membrane as a helical span at residues 210–230 (IIFCLVMGFLFAVDTGLYFSV). The Cytoplasmic portion of the chain corresponds to 231–257 (RKVLRSSKEDWRNGKVTWSRDPADKGG).

As to quaternary structure, forms a heterooligomeric complex with ITAM-containing signaling subunits FCER1G. Interacts (via transmembrane domain) with signaling subunits; this interaction is a prerequisite for receptor complex expression on the cell surface and intracellular signal transduction. Binds the Fc region of antigen-complexed IgG. Expressed in polymorphonuclear leukocytes, pulmonary alveolar macrophages and peripheral blood mononuclear cells (at protein level). Found in spleen, and at very low levels in lymph nodes but not in thymus or liver.

It localises to the cell membrane. Receptor for the invariable Fc fragment of immunoglobulin gamma (IgG). Optimally activated upon binding of clustered antigen-IgG complexes displayed on cell surfaces, triggers lysis of antibody-coated cells, a process known as antibody-dependent cellular cytotoxicity (ADCC). Does not bind free monomeric IgG, thus avoiding inappropriate effector cell activation in the absence of antigenic trigger. Mediates IgG effector functions on natural killer (NK) cells. Binds antigen-IgG complexes generated upon infection and triggers NK cell-dependent cytokine production and degranulation to limit viral load and propagation. Fc-binding subunit that associates with FCER1G adapter to form functional signaling complexes. Following the engagement of antigen-IgG complexes, triggers phosphorylation of immunoreceptor tyrosine-based activation motif (ITAM)-containing adapter with subsequent activation of phosphatidylinositol 3-kinase signaling and sustained elevation of intracellular calcium that ultimately drive NK cell activation. Mediates enhanced ADCC in response to afucosylated IgGs. The chain is Low affinity immunoglobulin gamma Fc region receptor III-A from Sus scrofa (Pig).